Here is a 1293-residue protein sequence, read N- to C-terminus: Phosphoribosylformylglycinamidine synthase (1293 aa).

ATP-binding positions include 305–316 and A676; that span reads GAATGSGGEIRD. Positions 305 to 327 are disordered; it reads GAATGSGGEIRDEGATGRGSKPK. 4 residues coordinate Mg(2+): D677, E716, N720, and D884. Residue S886 coordinates ATP. The Glutamine amidotransferase type-1 domain occupies 1040–1293; it reads MAILREQGVN…MFRNARVNLG (254 aa). Residue C1133 is the Nucleophile of the active site. Catalysis depends on residues H1258 and E1260.

In the N-terminal section; belongs to the FGAMS family. In terms of assembly, monomer.

The protein resides in the cytoplasm. The enzyme catalyses N(2)-formyl-N(1)-(5-phospho-beta-D-ribosyl)glycinamide + L-glutamine + ATP + H2O = 2-formamido-N(1)-(5-O-phospho-beta-D-ribosyl)acetamidine + L-glutamate + ADP + phosphate + H(+). The protein operates within purine metabolism; IMP biosynthesis via de novo pathway; 5-amino-1-(5-phospho-D-ribosyl)imidazole from N(2)-formyl-N(1)-(5-phospho-D-ribosyl)glycinamide: step 1/2. Functionally, phosphoribosylformylglycinamidine synthase involved in the purines biosynthetic pathway. Catalyzes the ATP-dependent conversion of formylglycinamide ribonucleotide (FGAR) and glutamine to yield formylglycinamidine ribonucleotide (FGAM) and glutamate. In Shewanella oneidensis (strain ATCC 700550 / JCM 31522 / CIP 106686 / LMG 19005 / NCIMB 14063 / MR-1), this protein is Phosphoribosylformylglycinamidine synthase.